Reading from the N-terminus, the 89-residue chain is Shiga toxin subunit B (89 aa).

The signal sequence occupies residues 1-20 (MKKTLLIAASLSFFSASALA). The cysteines at positions 24 and 77 are disulfide-linked.

It belongs to the stxB family. In terms of assembly, shiga toxin contains a single subunit A and five copies of subunit B.

Its function is as follows. The B subunit is responsible for the binding of the holotoxin to specific receptors on the target cell surface, such as globotriaosylceramide (Gb3) in human intestinal microvilli. The chain is Shiga toxin subunit B (stxB) from Shigella sonnei (Shigella sonnei bacteriophage 7888).